The sequence spans 101 residues: Small ribosomal subunit protein uS14 (101 aa).

It belongs to the universal ribosomal protein uS14 family. In terms of assembly, part of the 30S ribosomal subunit. Contacts proteins S3 and S10.

Functionally, binds 16S rRNA, required for the assembly of 30S particles and may also be responsible for determining the conformation of the 16S rRNA at the A site. The chain is Small ribosomal subunit protein uS14 from Shewanella halifaxensis (strain HAW-EB4).